Reading from the N-terminus, the 121-residue chain is MKLLIVFGLLASVYCFHRECSIQECCENQPYQIEDPCPIHYYSDWFIKIGSRKSARLVQLCEGDYGRRIPIHYEMFGNYTISCEPLEINCQAPPVGSLIVRCSYDYDFVEHHDVRVVLDFI.

Positions 1–15 are cleaved as a signal peptide; sequence MKLLIVFGLLASVYC. The SARS ORF8 Ig-like domain maps to 19–121; it reads ECSIQECCEN…HDVRVVLDFI (103 aa). 3 cysteine pairs are disulfide-bonded: cysteine 25/cysteine 90, cysteine 37/cysteine 102, and cysteine 61/cysteine 83.

This is Non-structural protein 8 from Bat coronavirus HKU3 (BtCoV).